The following is a 151-amino-acid chain: MARLHSGKRGSSGSTKPLRTEVPEWVSMSAEEVQAKIVEMAKDGNQSAIIGNILRDMYGIPNVKLVTGKSVSSIMKDAGFYSEVPEDLFNLMKKAINLRNHLENNPRDIHSKVGLNLIESKIRRLVKYYKGTKVLPATWRYSPQTARLLVE.

The disordered stretch occupies residues 1–20 (MARLHSGKRGSSGSTKPLRT).

The protein belongs to the universal ribosomal protein uS15 family. Part of the 30S ribosomal subunit.

The sequence is that of Small ribosomal subunit protein uS15 from Methanococcus vannielii (strain ATCC 35089 / DSM 1224 / JCM 13029 / OCM 148 / SB).